The sequence spans 157 residues: Probable calcium-binding protein CML15 (157 aa).

4 consecutive EF-hand domains span residues Asp3–Lys38, Pro39–Glu74, Ile78–Pro113, and Leu114–Asp149. Asp16, Asp18, Asp20, Ser22, Glu27, Asp52, Asn54, Asn56, Glu63, Asp91, Asp93, Asn95, Glu102, Asp127, Asn129, Asp131, and Glu138 together coordinate Ca(2+).

In terms of biological role, potential calcium sensor. This chain is Probable calcium-binding protein CML15 (CML15), found in Arabidopsis thaliana (Mouse-ear cress).